A 368-amino-acid chain; its full sequence is Peptide chain release factor 2 (368 aa).

Position 251 is an N5-methylglutamine (Gln251).

It belongs to the prokaryotic/mitochondrial release factor family. Methylated by PrmC. Methylation increases the termination efficiency of RF2.

The protein resides in the cytoplasm. Functionally, peptide chain release factor 2 directs the termination of translation in response to the peptide chain termination codons UGA and UAA. This Nitratiruptor sp. (strain SB155-2) protein is Peptide chain release factor 2.